Consider the following 393-residue polypeptide: Branched-chain amino acid aminotransferase 1, mitochondrial (393 aa).

The transit peptide at 1–34 (MIHRGLWLHNLVQSYRVGSSSSSSTLFKLVYRYN) directs the protein to the mitochondrion. Residue Arg138 participates in pyridoxal 5'-phosphate binding. Lys240 serves as the catalytic Proton acceptor. Position 240 is an N6-(pyridoxal phosphate)lysine (Lys240). Glu276 is a pyridoxal 5'-phosphate binding site.

Belongs to the class-IV pyridoxal-phosphate-dependent aminotransferase family. Pyridoxal 5'-phosphate is required as a cofactor. As to expression, expressed specifically in lupulin glands.

The protein resides in the mitochondrion. It catalyses the reaction L-isoleucine + 2-oxoglutarate = (S)-3-methyl-2-oxopentanoate + L-glutamate. The catalysed reaction is L-leucine + 2-oxoglutarate = 4-methyl-2-oxopentanoate + L-glutamate. The enzyme catalyses L-valine + 2-oxoglutarate = 3-methyl-2-oxobutanoate + L-glutamate. Its pathway is amino-acid biosynthesis; L-isoleucine biosynthesis; L-isoleucine from 2-oxobutanoate: step 4/4. It participates in amino-acid biosynthesis; L-leucine biosynthesis; L-leucine from 3-methyl-2-oxobutanoate: step 4/4. It functions in the pathway amino-acid biosynthesis; L-valine biosynthesis; L-valine from pyruvate: step 4/4. In terms of biological role, converts 2-oxo acids to branched-chain amino acids (BCAA). Shows no kinetic preferences corresponding to anabolic or catabolic functions, but likely involved in BCAA catabolism. The sequence is that of Branched-chain amino acid aminotransferase 1, mitochondrial from Humulus lupulus (European hop).